An 861-amino-acid polypeptide reads, in one-letter code: Bifunctional uridylyltransferase/uridylyl-removing enzyme (861 aa).

Residues M1 to R321 form a uridylyltransferase region. Residues L322–T678 form a uridylyl-removing region. In terms of domain architecture, HD spans V440–L562. 2 consecutive ACT domains span residues E679–R760 and Q788–Y861.

This sequence belongs to the GlnD family. Mg(2+) serves as cofactor.

The catalysed reaction is [protein-PII]-L-tyrosine + UTP = [protein-PII]-uridylyl-L-tyrosine + diphosphate. It carries out the reaction [protein-PII]-uridylyl-L-tyrosine + H2O = [protein-PII]-L-tyrosine + UMP + H(+). Uridylyltransferase (UTase) activity is inhibited by glutamine, while glutamine activates uridylyl-removing (UR) activity. Functionally, modifies, by uridylylation and deuridylylation, the PII regulatory proteins (GlnB and homologs), in response to the nitrogen status of the cell that GlnD senses through the glutamine level. Under low glutamine levels, catalyzes the conversion of the PII proteins and UTP to PII-UMP and PPi, while under higher glutamine levels, GlnD hydrolyzes PII-UMP to PII and UMP (deuridylylation). Thus, controls uridylylation state and activity of the PII proteins, and plays an important role in the regulation of nitrogen assimilation and metabolism. The polypeptide is Bifunctional uridylyltransferase/uridylyl-removing enzyme (Legionella pneumophila (strain Corby)).